The following is a 405-amino-acid chain: Succinyl-CoA--L-malate CoA-transferase beta subunit (405 aa).

Catalysis depends on Asp175, which acts as the Nucleophile.

It belongs to the CoA-transferase III family. As to quaternary structure, forms a large complex composed of six heterodimers (alpha, beta).

It carries out the reaction succinyl-CoA + (S)-malate = (S)-malyl-CoA + succinate. It catalyses the reaction (3S)-citramalate + succinyl-CoA = (3S)-citramalyl-CoA + succinate. In terms of biological role, involved in the 3-hydroxypropionate cycle used for autotrophic carbon dioxide fixation. Catalyzes the transfer of CoA moiety from succinyl-CoA to L-malate to yield L-malyl-CoA. The protein is Succinyl-CoA--L-malate CoA-transferase beta subunit (smtB) of Chloroflexus aurantiacus (strain ATCC 29366 / DSM 635 / J-10-fl).